The following is a 98-amino-acid chain: snRNA-activating protein complex subunit 5 (98 aa).

Residues 73-82 (QTTLELSTKS) show a composition bias toward polar residues. The disordered stretch occupies residues 73-98 (QTTLELSTKSHVTEEEEEEEEEESDS). Thr85 is subject to Phosphothreonine. The span at 86–98 (EEEEEEEEEESDS) shows a compositional bias: acidic residues.

Part of the SNAPc complex composed of 5 subunits: SNAPC1, SNAPC2, SNAPC3, SNAPC4 and SNAPC5. SNAPC5 interacts with SNAPC4.

It localises to the nucleus. In terms of biological role, part of the SNAPc complex required for the transcription of both RNA polymerase II and III small-nuclear RNA genes. Binds to the proximal sequence element (PSE), a non-TATA-box basal promoter element common to these 2 types of genes. Recruits TBP and BRF2 to the U6 snRNA TATA box. This is snRNA-activating protein complex subunit 5 (SNAPC5) from Homo sapiens (Human).